The following is a 1755-amino-acid chain: Transposon Ty1-GR2 Gag-Pol polyprotein (1755 aa).

A compositionally biased stretch (low complexity) spans 1–16 (MESQQLSQHSHISHGS). 3 disordered regions span residues 1–93 (MESQ…MMTQ), 126–173 (PQSQ…RPPP), and 352–421 (GSRN…SKST). Composition is skewed to polar residues over residues 48–60 (TKANSQQTTTPAS) and 127–152 (QSQFPQYPSSVGTPLSTPSPESGNTF). The segment covering 153 to 165 (TDSSSADSDMTST) has biased composition (low complexity). An RNA-binding region spans residues 299 to 401 (NNGIHINNKV…NSKSKTARAH (103 aa)). Low complexity predominate over residues 402–418 (NVSTSNNSPSTDNDSIS). Ser416 is subject to Phosphoserine. The active-site For protease activity; shared with dimeric partner is the Asp461. The tract at residues 583–640 (NVHTSESTRKYPYPFIHRMLAHANAQTIRYSLKNNTITYFNESDVDWSSAIDYQCPDC) is integrase-type zinc finger-like. The region spanning 660 to 835 (NSYEPFQYLH…AGLDISTLLP (176 aa)) is the Integrase catalytic domain. Residues Asp671 and Asp736 each contribute to the Mg(2+) site. Disordered regions lie at residues 956 to 1087 (SKAV…ETEK), 1092 to 1111 (RSPSIDASPPENNSSHNIVP), and 1130 to 1187 (DLPL…DNET). Residues 960 to 969 (SPTDSTPPST) are compositionally biased toward low complexity. A compositionally biased stretch (polar residues) spans 1005-1015 (STPQISNIEST). Residues 1038–1053 (ESSHASKSKDFRHSDS) show a composition bias toward basic and acidic residues. Composition is skewed to polar residues over residues 1054–1082 (YSENETNHTNVPISSTGGTNNKTVPQISD) and 1101–1111 (PENNSSHNIVP). Residues 1178-1212 (KKRSLEDNETEIKVSRDTWNTKNMRSLEPPRSKKR) carry the Bipartite nuclear localization signal motif. In terms of domain architecture, Reverse transcriptase Ty1/copia-type spans 1338–1476 (NNYYITQLDI…DILGLEIKYQ (139 aa)). 6 residues coordinate Mg(2+): Asp1346, Asp1427, Asp1428, Asp1610, Glu1652, and Asp1685. One can recognise an RNase H Ty1/copia-type domain in the interval 1610–1752 (DASYGNQPYY…IKTFKLLTNK (143 aa)).

The capsid protein forms a homotrimer, from which the VLPs are assembled. The protease is a homodimer, whose active site consists of two apposed aspartic acid residues. Initially, virus-like particles (VLPs) are composed of the structural unprocessed proteins Gag and Gag-Pol, and also contain the host initiator methionine tRNA (tRNA(i)-Met) which serves as a primer for minus-strand DNA synthesis, and a dimer of genomic Ty RNA. Processing of the polyproteins occurs within the particle and proceeds by an ordered pathway, called maturation. First, the protease (PR) is released by autocatalytic cleavage of the Gag-Pol polyprotein yielding capsid protein p45 and a Pol-p154 precursor protein. This cleavage is a prerequisite for subsequent processing of Pol-p154 at the remaining sites to release the mature structural and catalytic proteins. Maturation takes place prior to the RT reaction and is required to produce transposition-competent VLPs.

The protein localises to the cytoplasm. The protein resides in the nucleus. The catalysed reaction is DNA(n) + a 2'-deoxyribonucleoside 5'-triphosphate = DNA(n+1) + diphosphate. It carries out the reaction Endonucleolytic cleavage to 5'-phosphomonoester.. In terms of biological role, capsid protein (CA) is the structural component of the virus-like particle (VLP), forming the shell that encapsulates the retrotransposons dimeric RNA genome. The particles are assembled from trimer-clustered units and there are holes in the capsid shells that allow for the diffusion of macromolecules. CA also has nucleocapsid-like chaperone activity, promoting primer tRNA(i)-Met annealing to the multipartite primer-binding site (PBS), dimerization of Ty1 RNA and initiation of reverse transcription. Functionally, the aspartyl protease (PR) mediates the proteolytic cleavages of the Gag and Gag-Pol polyproteins after assembly of the VLP. Its function is as follows. Reverse transcriptase/ribonuclease H (RT) is a multifunctional enzyme that catalyzes the conversion of the retro-elements RNA genome into dsDNA within the VLP. The enzyme displays a DNA polymerase activity that can copy either DNA or RNA templates, and a ribonuclease H (RNase H) activity that cleaves the RNA strand of RNA-DNA heteroduplexes during plus-strand synthesis and hydrolyzes RNA primers. The conversion leads to a linear dsDNA copy of the retrotransposon that includes long terminal repeats (LTRs) at both ends. Integrase (IN) targets the VLP to the nucleus, where a subparticle preintegration complex (PIC) containing at least integrase and the newly synthesized dsDNA copy of the retrotransposon must transit the nuclear membrane. Once in the nucleus, integrase performs the integration of the dsDNA into the host genome. The sequence is that of Transposon Ty1-GR2 Gag-Pol polyprotein (TY1B-GR2) from Saccharomyces cerevisiae (strain ATCC 204508 / S288c) (Baker's yeast).